The following is a 139-amino-acid chain: Hydrogenase maturation factor HypA (139 aa).

His-2 contributes to the Ni(2+) binding site. Zn(2+)-binding residues include Cys-73, Cys-76, Cys-110, and Cys-113.

Belongs to the HypA/HybF family.

In terms of biological role, involved in the maturation of [NiFe] hydrogenases. Required for nickel insertion into the metal center of the hydrogenase. The chain is Hydrogenase maturation factor HypA from Pyrococcus horikoshii (strain ATCC 700860 / DSM 12428 / JCM 9974 / NBRC 100139 / OT-3).